Consider the following 257-residue polypeptide: Imidazole glycerol phosphate synthase subunit HisF (257 aa).

Residues D11 and D130 contribute to the active site.

The protein belongs to the HisA/HisF family. Heterodimer of HisH and HisF.

The protein localises to the cytoplasm. The catalysed reaction is 5-[(5-phospho-1-deoxy-D-ribulos-1-ylimino)methylamino]-1-(5-phospho-beta-D-ribosyl)imidazole-4-carboxamide + L-glutamine = D-erythro-1-(imidazol-4-yl)glycerol 3-phosphate + 5-amino-1-(5-phospho-beta-D-ribosyl)imidazole-4-carboxamide + L-glutamate + H(+). The protein operates within amino-acid biosynthesis; L-histidine biosynthesis; L-histidine from 5-phospho-alpha-D-ribose 1-diphosphate: step 5/9. Its function is as follows. IGPS catalyzes the conversion of PRFAR and glutamine to IGP, AICAR and glutamate. The HisF subunit catalyzes the cyclization activity that produces IGP and AICAR from PRFAR using the ammonia provided by the HisH subunit. The polypeptide is Imidazole glycerol phosphate synthase subunit HisF (Prochlorococcus marinus (strain SARG / CCMP1375 / SS120)).